Consider the following 574-residue polypeptide: Sulfate adenylyltransferase (574 aa).

The N-terminal stretch occupies residues 1–169; that stretch reads MANPPHGGVL…IEAINKLNHY (169 aa). Positions 170 to 394 are catalytic; that stretch reads DYVALRYTPA…LRESSPPRHT (225 aa). Gln-197 provides a ligand contact to sulfate. ATP contacts are provided by residues 197–200 and 291–294; these read QTRN and GRDH. Residues Thr-198, Arg-199, and Asn-200 contribute to the active site. Residue Arg-199 participates in sulfate binding. Ala-295 is a binding site for sulfate. Val-333 contacts ATP. Residues 395–574 are allosteric regulation domain; adenylyl-sulfate kinase-like; that stretch reads QGFTIFLTGY…LETEGFFDRS (180 aa). 3'-phosphoadenylyl sulfate contacts are provided by residues 434–437, Arg-451, 477–478, and Arg-516; these read DTVR and IA.

The protein in the N-terminal section; belongs to the sulfate adenylyltransferase family. It in the C-terminal section; belongs to the APS kinase family. In terms of assembly, homohexamer. Dimer of trimers.

Its subcellular location is the cytoplasm. The catalysed reaction is sulfate + ATP + H(+) = adenosine 5'-phosphosulfate + diphosphate. Its pathway is sulfur metabolism; hydrogen sulfide biosynthesis; sulfite from sulfate: step 1/3. Its activity is regulated as follows. Allosterically inhibited by 3'-phosphoadenosine 5'-phosphosulfate (PAPS). In terms of biological role, catalyzes the first intracellular reaction of sulfate assimilation, forming adenosine-5'-phosphosulfate (APS) from inorganic sulfate and ATP. Plays an important role in sulfate activation as a component of the biosynthesis pathway of sulfur-containing amino acids. In Aspergillus fumigatus (strain ATCC MYA-4609 / CBS 101355 / FGSC A1100 / Af293) (Neosartorya fumigata), this protein is Sulfate adenylyltransferase.